Consider the following 950-residue polypeptide: Translation initiation factor IF-2 (950 aa).

2 disordered regions span residues 57 to 254 (LAER…AVVI) and 304 to 328 (DVSR…KSLS). Composition is skewed to low complexity over residues 101-131 (AEPQ…EPAA) and 139-169 (AAPL…QPAA). Pro residues predominate over residues 170-215 (PAAPPAPTAQPSAPPPAAAQPRPPQPSAPSRPPPPGYRPAPPPGAR). Residues 216–233 (PPVSAAPGAPGQPGAAGQ) show a composition bias toward low complexity. The region spanning 449–618 (IRPPVVTVMG…ALQSEVLELK (170 aa)) is the tr-type G domain. The tract at residues 458–465 (GHVDHGKT) is G1. GTP is bound at residue 458 to 465 (GHVDHGKT). Residues 483-487 (GITQH) are G2. The segment at 504–507 (DTPG) is G3. GTP-binding positions include 504 to 508 (DTPGH) and 558 to 561 (NKVD). The tract at residues 558 to 561 (NKVD) is G4. The interval 594–596 (SAR) is G5.

It belongs to the TRAFAC class translation factor GTPase superfamily. Classic translation factor GTPase family. IF-2 subfamily.

Its subcellular location is the cytoplasm. Its function is as follows. One of the essential components for the initiation of protein synthesis. Protects formylmethionyl-tRNA from spontaneous hydrolysis and promotes its binding to the 30S ribosomal subunits. Also involved in the hydrolysis of GTP during the formation of the 70S ribosomal complex. The chain is Translation initiation factor IF-2 from Anaeromyxobacter dehalogenans (strain 2CP-C).